The following is a 336-amino-acid chain: Tetraacyldisaccharide 4'-kinase (336 aa).

60–67 provides a ligand contact to ATP; it reads TVGGTGKT.

The protein belongs to the LpxK family.

It catalyses the reaction a lipid A disaccharide + ATP = a lipid IVA + ADP + H(+). It functions in the pathway glycolipid biosynthesis; lipid IV(A) biosynthesis; lipid IV(A) from (3R)-3-hydroxytetradecanoyl-[acyl-carrier-protein] and UDP-N-acetyl-alpha-D-glucosamine: step 6/6. Transfers the gamma-phosphate of ATP to the 4'-position of a tetraacyldisaccharide 1-phosphate intermediate (termed DS-1-P) to form tetraacyldisaccharide 1,4'-bis-phosphate (lipid IVA). This Pseudomonas fluorescens (strain SBW25) protein is Tetraacyldisaccharide 4'-kinase.